Consider the following 29-residue polypeptide: Conotoxin pr6a (29 aa).

Cystine bridges form between Cys2–Cys20, Cys9–Cys24, and Cys19–Cys28.

Expressed by the venom duct.

The protein resides in the secreted. In terms of biological role, intraperitoneal injection into fish (1 nmol) provokes hyperactivity and erratic swimming in various directions after 14 minutes. The protein is Conotoxin pr6a of Conus parius (Cone snail).